The following is a 391-amino-acid chain: Somatostatin receptor type 1 (391 aa).

The interval methionine 1–threonine 50 is disordered. At methionine 1–glycine 56 the chain is on the extracellular side. Asparagine 4 carries an N-linked (GlcNAc...) asparagine glycan. The segment covering serine 8–serine 20 has biased composition (low complexity). N-linked (GlcNAc...) asparagine glycans are attached at residues asparagine 44 and asparagine 48. A helical transmembrane segment spans residues serine 57–leucine 84. At arginine 85–asparagine 94 the chain is on the cytoplasmic side. Residues isoleucine 95–leucine 120 form a helical membrane-spanning segment. Topologically, residues arginine 121–arginine 131 are extracellular. Cysteine 130 and cysteine 208 are oxidised to a cystine. A helical transmembrane segment spans residues leucine 132 to valine 153. Residues aspartate 154–lysine 175 lie on the Cytoplasmic side of the membrane. Residues valine 176–serine 196 form a helical membrane-spanning segment. Over arginine 197–tryptophan 219 the chain is Extracellular. Residues leucine 220–valine 244 traverse the membrane as a helical segment. Residues leucine 245–threonine 270 are Cytoplasmic-facing. The chain crosses the membrane as a helical span at residues leucine 271–phenylalanine 296. At alanine 297–threonine 303 the chain is on the extracellular side. Residues valine 304–serine 327 form a helical membrane-spanning segment. The Cytoplasmic portion of the chain corresponds to aspartate 328 to leucine 391. The S-palmitoyl cysteine moiety is linked to residue cysteine 339.

The protein belongs to the G-protein coupled receptor 1 family. Jejunum and stomach.

The protein localises to the cell membrane. Receptor for somatostatin with higher affinity for somatostatin-14 than -28. This receptor is coupled via pertussis toxin sensitive G proteins to inhibition of adenylyl cyclase. In addition it stimulates phosphotyrosine phosphatase and Na(+)/H(+) exchanger via pertussis toxin insensitive G proteins. This Mus musculus (Mouse) protein is Somatostatin receptor type 1 (Sstr1).